Here is a 30-residue protein sequence, read N- to C-terminus: Beta/omega-theraphotoxin-Tp2a (30 aa).

3 disulfide bridges follow: Cys2–Cys16, Cys9–Cys21, and Cys15–Cys25. A flexible tail region important for ability to inhibit Nav channel region spans residues 26–30 (KKKLW). The tract at residues 29–30 (LW) is hydrophobic dyad that anchors the toxin into the membrane while positioning it over the S3 helix of Nav1.7/SCN9A.

It belongs to the neurotoxin 30 (phrixotoxin) family. In terms of tissue distribution, expressed by the venom gland.

Its subcellular location is the secreted. Gating-modifier toxin that targets voltage-gated sodium channels with a selective activity on Nav1.7/SCN9A (IC(50)=1-1.5 nM). It inhibits both activation and inactivation. For inhibition of activation, it is 100-fold more selective for Nav1.7/SCN9A (IC(50)=0.26-3) than for other sodium channels (Nav1.2/SCN2A (IC(50)=40-540 nM), Nav1.3/SCN3A (IC(50)=102 nM), Nav1.4/SCN4A (IC(50)=30-39 nM), Nav1.5/SCN5A (IC(50)=19-90 nM), Nav1.6/SCN8A (IC(50)=26 nM), and Nav1.8/SCN10A (IC(50)=146 nM)). For inhibition of inactivation, it is 20-fold more potent in inhibiting inactivation on Nav1.7/SCN9A (IC(50)=250 nM) than other channels (about 4.6 uM for all channels). It also weakly inhibits Cav1.2/CACNA1C and Cav3.2/CACNA1H (29% block at 1 uM). It inhibits Nav1.7/SCN9A activation by interacting with DII and impairs Nav1.7/SCN9A inactivation by interacting with DIV. It docks on top of the DII S3 helix Nav1.7/SCN9A. It is about 60-fold less active on Nav1.7/SCN9A at depolarized potential (0 mV; IC(50)=15 nM), compared to -120 mV potential (IC(50)=0.26 nM). This toxin binds to lipid membrane. This ability correlates with hNav1.7/SCN9A inhibition, showing that membrane binding is the first step in the inhibitory mechanism of this toxin. It inhibits Nav1.2/SCN2A less potently when it is coexpressed with SCN2B or SCN4B than when it is expressed alone, showing that beta subunits (SCN2B and SCN4B) have a protective effect. The chain is Beta/omega-theraphotoxin-Tp2a from Thrixopelma pruriens (Peruvian green velvet tarantula).